The primary structure comprises 355 residues: Peptide chain release factor 1 (355 aa).

Glutamine 230 carries the post-translational modification N5-methylglutamine.

It belongs to the prokaryotic/mitochondrial release factor family. In terms of processing, methylated by PrmC. Methylation increases the termination efficiency of RF1.

The protein resides in the cytoplasm. Its function is as follows. Peptide chain release factor 1 directs the termination of translation in response to the peptide chain termination codons UAG and UAA. The chain is Peptide chain release factor 1 from Geobacter sulfurreducens (strain ATCC 51573 / DSM 12127 / PCA).